Consider the following 89-residue polypeptide: Small ribosomal subunit protein uS14A (89 aa).

Residues Ala-29–Met-62 are disordered. Residues Arg-49–Pro-58 are compositionally biased toward basic and acidic residues.

This sequence belongs to the universal ribosomal protein uS14 family. Part of the 30S ribosomal subunit. Contacts proteins S3 and S10.

Binds 16S rRNA, required for the assembly of 30S particles and may also be responsible for determining the conformation of the 16S rRNA at the A site. The sequence is that of Small ribosomal subunit protein uS14A from Enterococcus faecalis (strain ATCC 700802 / V583).